Consider the following 112-residue polypeptide: UPF0482 protein Ent638_1930 (112 aa).

A signal peptide spans 1 to 27; sequence MTTLRKRLCLATLLSLTALAFTAPVSA.

The protein belongs to the UPF0482 family.

The sequence is that of UPF0482 protein Ent638_1930 from Enterobacter sp. (strain 638).